The primary structure comprises 112 residues: Tyrosine-protein phosphatase 17 (112 aa).

One can recognise a Tyrosine-protein phosphatase domain in the interval 1-112 (WRMIWEHECC…QPHTAGPIVV (112 aa)). Aspartate 82 contributes to the substrate binding site.

Belongs to the protein-tyrosine phosphatase family.

It catalyses the reaction O-phospho-L-tyrosyl-[protein] + H2O = L-tyrosyl-[protein] + phosphate. In Styela plicata (Wrinkled sea squirt), this protein is Tyrosine-protein phosphatase 17 (STY-17).